The following is a 294-amino-acid chain: Elongation factor Ts (294 aa).

The interval 79-82 (TDFV) is involved in Mg(2+) ion dislocation from EF-Tu.

It belongs to the EF-Ts family.

It localises to the cytoplasm. Associates with the EF-Tu.GDP complex and induces the exchange of GDP to GTP. It remains bound to the aminoacyl-tRNA.EF-Tu.GTP complex up to the GTP hydrolysis stage on the ribosome. The chain is Elongation factor Ts from Shouchella clausii (strain KSM-K16) (Alkalihalobacillus clausii).